Consider the following 188-residue polypeptide: Protein salivary glands marred (188 aa).

Belongs to the TNFAIP8 family. As to quaternary structure, interacts with the Ste20-like MAP kinase msn.

It is found in the cytoplasm. Its subcellular location is the cytoskeleton. Functionally, important for modulating JNK signaling, cytoskeletal remodeling and autophagy in larval salivary glands. During salivary gland development, involved in the positive regulation of the JNK signaling pathway, acting downstream of the TNF ligand egr and upstream of bsk. This is Protein salivary glands marred from Drosophila melanogaster (Fruit fly).